Reading from the N-terminus, the 227-residue chain is CDP-diacylglycerol--glycerol-3-phosphate 3-phosphatidyltransferase (227 aa).

Helical transmembrane passes span Ile-30 to Ala-50, Val-58 to Ile-78, Val-112 to Leu-132, Trp-159 to Leu-179, and Trp-192 to Ile-212.

It belongs to the CDP-alcohol phosphatidyltransferase class-I family.

The protein resides in the cell membrane. The catalysed reaction is a CDP-1,2-diacyl-sn-glycerol + sn-glycerol 3-phosphate = a 1,2-diacyl-sn-glycero-3-phospho-(1'-sn-glycero-3'-phosphate) + CMP + H(+). It functions in the pathway phospholipid metabolism; phosphatidylglycerol biosynthesis; phosphatidylglycerol from CDP-diacylglycerol: step 1/2. Its function is as follows. This protein catalyzes the committed step to the synthesis of the acidic phospholipids. The polypeptide is CDP-diacylglycerol--glycerol-3-phosphate 3-phosphatidyltransferase (pgsA) (Mycoplasma pneumoniae (strain ATCC 29342 / M129 / Subtype 1) (Mycoplasmoides pneumoniae)).